We begin with the raw amino-acid sequence, 427 residues long: Homogentisate 1,2-dioxygenase (427 aa).

Histidine 285 acts as the Proton acceptor in catalysis. Fe cation contacts are provided by histidine 328 and glutamate 334. The homogentisate site is built by tyrosine 343 and histidine 364. Histidine 364 provides a ligand contact to Fe cation.

The protein belongs to the homogentisate dioxygenase family. As to quaternary structure, hexamer; dimer of trimers. The cofactor is Fe cation.

The catalysed reaction is homogentisate + O2 = 4-maleylacetoacetate + H(+). Its pathway is amino-acid degradation; L-phenylalanine degradation; acetoacetate and fumarate from L-phenylalanine: step 4/6. Involved in the catabolism of homogentisate (2,5-dihydroxyphenylacetate or 2,5-OH-PhAc), a central intermediate in the degradation of phenylalanine and tyrosine. Catalyzes the oxidative ring cleavage of the aromatic ring of homogentisate to yield maleylacetoacetate. This is Homogentisate 1,2-dioxygenase from Caulobacter sp. (strain K31).